The following is a 335-amino-acid chain: Urokinase plasminogen activator surface receptor (335 aa).

A signal peptide spans 1-22 (MGHPPLLPLLLLLHTCVPASWG). 3 UPAR/Ly6 domains span residues 23-114 (LRCM…RSRY), 115-213 (LECI…PQNG), and 214-305 (RQCY…YRSG). Cystine bridges form between Cys25-Cys46, Cys28-Cys34, and Cys39-Cys67. N-linked (GlcNAc...) asparagine glycosylation is present at Asn74. Intrachain disulfides connect Cys93–Cys98, Cys117–Cys144, Cys120–Cys127, Cys137–Cys169, Cys175–Cys192, Cys193–Cys198, Cys216–Cys244, Cys219–Cys227, Cys237–Cys263, Cys269–Cys287, and Cys288–Cys293. Asn124 is a glycosylation site (N-linked (GlcNAc...) asparagine). Asn184, Asn194, Asn222, and Asn255 each carry an N-linked (GlcNAc...) asparagine glycan. Gly305 carries the GPI-anchor amidated glycine lipid modification. A propeptide spans 306–335 (AAPQPGPAHLSLTITLLMTARLWGGTLLWT) (removed in mature form).

In terms of assembly, monomer. Interacts (via the UPAR/Ly6 domains) with SRPX2. Interacts with MRC2. Interacts with FAP (seprase); the interaction occurs at the cell surface of invadopodia membrane. Interacts with SORL1 (via N-terminal ectodomain); this interaction decreases PLAUR internalization. The ternary complex composed of PLAUR-PLAU-SERPINE1 also interacts with SORL1. Interacts with CD82; this interaction prevents PLAUR from binding to its high affinity ligand PLAU.

It localises to the cell membrane. It is found in the cell projection. Its subcellular location is the invadopodium membrane. Its function is as follows. Acts as a receptor for urokinase plasminogen activator. Plays a role in localizing and promoting plasmin formation. Mediates the proteolysis-independent signal transduction activation effects of U-PA. It is subject to negative-feedback regulation by U-PA which cleaves it into an inactive form. This chain is Urokinase plasminogen activator surface receptor (PLAUR), found in Pan troglodytes (Chimpanzee).